We begin with the raw amino-acid sequence, 282 residues long: Transcription repressor OFP18 (282 aa).

The segment at 1–85 is disordered; the sequence is MVRKMKLPFL…YSSFSSTSHA (85 aa). Residues 15 to 35 show a composition bias toward low complexity; it reads SSSSFSSNSSSSSSSWPWPSS. The segment covering 36–47 has biased composition (polar residues); it reads HQQNLKTISSKA. A compositionally biased stretch (low complexity) spans 66-85; it reads SFSSSPSSSSYSSFSSTSHA. The region spanning 139 to 199 is the OVATE domain; sequence LSLESNDPYT…FAAFVDLVLN (61 aa).

As to expression, expressed in roots and shoots.

The protein localises to the nucleus. Its function is as follows. Transcriptional repressor that regulates multiple aspects of plant growth and development through the regulation of BEL1-LIKE (BLH) and KNOX TALE (KNAT) homeodomain transcription factors. The sequence is that of Transcription repressor OFP18 (OFP18) from Arabidopsis thaliana (Mouse-ear cress).